A 417-amino-acid chain; its full sequence is Transcobalamin-1 (417 aa).

A signal peptide spans 1 to 25; the sequence is MRQSHQLPLVGLLLFSLIPSQLCQS. The interval 24–308 is globular N-terminal alpha domain; sequence QSCVVSEKDY…DVTKLLLVPK (285 aa). A glycan (N-linked (GlcNAc...) asparagine) is linked at Asn-90. Cyanocob(III)alamin is bound at residue 143–147; the sequence is TNYYQ. Cys-156 and Cys-198 are oxidised to a cystine. Residues Asn-161, Asn-166, and Asn-179 are each glycosylated (N-linked (GlcNAc...) asparagine). Cyanocob(III)alamin-binding residues include Asp-187 and Gln-287. Residues 309–327 are flexible linker; the sequence is VQVNITDEPVPVVPTLSPE. N-linked (GlcNAc...) asparagine glycosylation is found at Asn-312, Asn-328, Asn-345, and Asn-360. The interval 328–417 is globular C-terminal beta domain; sequence NISVIYCVKI…GIMLSKMESI (90 aa). Cyanocob(III)alamin contacts are provided by residues 376 to 377 and 393 to 395; these read YI and WEH.

The protein belongs to the eukaryotic cobalamin transport proteins family. In terms of processing, contains about 30% carbohydrates. Haptocorrins are a family of cobalamin-binding glycoproteins found in blood, salivary and mucosal secretions.

The protein localises to the secreted. Functionally, binds vitamin B12 with femtomolar affinity and protects it from the acidic environment of the stomach. Binds to cobalamin and to cobalamin analogs such as cobinamide. This Sus scrofa (Pig) protein is Transcobalamin-1 (TCN1).